A 227-amino-acid polypeptide reads, in one-letter code: Triosephosphate isomerase (227 aa).

Substrate is bound at residue 6–8; sequence NLK. His-85 serves as the catalytic Electrophile. Glu-152 (proton acceptor) is an active-site residue. Residues Gly-158 and Ser-188 each contribute to the substrate site.

Belongs to the triosephosphate isomerase family. As to quaternary structure, homodimer.

It localises to the cytoplasm. It catalyses the reaction D-glyceraldehyde 3-phosphate = dihydroxyacetone phosphate. The protein operates within carbohydrate biosynthesis; gluconeogenesis. It participates in carbohydrate degradation; glycolysis; D-glyceraldehyde 3-phosphate from glycerone phosphate: step 1/1. Involved in the gluconeogenesis. Catalyzes stereospecifically the conversion of dihydroxyacetone phosphate (DHAP) to D-glyceraldehyde-3-phosphate (G3P). The sequence is that of Triosephosphate isomerase from Campylobacter concisus (strain 13826).